The primary structure comprises 354 residues: Methylthioribose-1-phosphate isomerase (354 aa).

Residues 58 to 60 (RGA), R101, and Q204 each bind substrate. Residue D245 is the Proton donor of the active site. 255 to 256 (NK) lines the substrate pocket.

This sequence belongs to the eIF-2B alpha/beta/delta subunits family. MtnA subfamily.

The enzyme catalyses 5-(methylsulfanyl)-alpha-D-ribose 1-phosphate = 5-(methylsulfanyl)-D-ribulose 1-phosphate. Its pathway is amino-acid biosynthesis; L-methionine biosynthesis via salvage pathway; L-methionine from S-methyl-5-thio-alpha-D-ribose 1-phosphate: step 1/6. Catalyzes the interconversion of methylthioribose-1-phosphate (MTR-1-P) into methylthioribulose-1-phosphate (MTRu-1-P). The protein is Methylthioribose-1-phosphate isomerase of Xanthomonas euvesicatoria pv. vesicatoria (strain 85-10) (Xanthomonas campestris pv. vesicatoria).